The primary structure comprises 796 residues: Probable phosphoketolase (796 aa).

The protein belongs to the XFP family. It depends on thiamine diphosphate as a cofactor.

The sequence is that of Probable phosphoketolase from Clostridium acetobutylicum (strain ATCC 824 / DSM 792 / JCM 1419 / IAM 19013 / LMG 5710 / NBRC 13948 / NRRL B-527 / VKM B-1787 / 2291 / W).